Reading from the N-terminus, the 766-residue chain is MVVTRSARPQARNEATSVESLRQKNSAVTRLHVHPKGRKGSSPDNPNTTESQTTPERSPAPKTRKSGTTGSLPEMNKPATDGEISEAESDCSSVPEVQDPVFRVTRRRQILVAGTPVSSVRKRLKITRVSESHTEEVVSEADSHVSGISRIMPPTEITTRRSKAKSQREPKQESHVEVISDAESSCSDISFSGIATRRTTRSMQRKLQAQTEENNTKIVLENEKEIIHTPVNLEDSVNRRTSRLLARSLSQINKPNFSNNEIYNDPDDSFFGISGKKLAVKKTRNFTIREEKQDSISPLKEITKQNCKSLDEEAKKIIDGGKEGNEKNSQLNLSEFQDTGLQQLVSQRHSTPESDKTTSESSTLNHEAVMKSLAQTFAVVEMDRWNEERKNAIKTSDCSEPGDGSYSDSDEECTVIGVSEDMSKEKEVDSESDTKPSNLEFNTTQDKDDSVLLVLSSDESQQSEHSENEEDTVCFVENNGNKESLNGDSENLSHDNALFVIDTTPGLSADKNFYLDEEDKAGEVATEEEEEEEEEESEEELSDHDRNKDNEFSDEDNLLSNTKSKLLKLMSSSIDTGLNIKELGGLYINFNADKVQLNKRTLTQMKEKRKDELLQKTVITPEFEKNYCVPPYSESKYKLQKKRRQERQKTAGDGWFGMKAPELTDELKNDLKALKMRASMDPKRFYKKNDRDGFPKYFQIGTIVDNPADFYHSRVPKKQRKRTIVEELLADSEFRRYNRRKYSEIMAEKAANAAGKKFRKKKKFRN.

The tract at residues 1 to 99 (MVVTRSARPQ…DCSSVPEVQD (99 aa)) is disordered. Polar residues-rich tracts occupy residues 13–28 (NEATSVESLRQKNSAV) and 42–56 (SPDNPNTTESQTTPE). T127 bears the Phosphothreonine mark. Residues S139, S143, and S146 each carry the phosphoserine modification. The disordered stretch occupies residues 155 to 175 (TEITTRRSKAKSQREPKQESH). The segment covering 166–175 (SQREPKQESH) has biased composition (basic and acidic residues). Phosphoserine occurs at positions 180 and 190. K217 participates in a covalent cross-link: Glycyl lysine isopeptide (Lys-Gly) (interchain with G-Cter in SUMO2). Residue T229 is modified to Phosphothreonine. A phosphoserine mark is found at S236, S248, and S250. A Glycyl lysine isopeptide (Lys-Gly) (interchain with G-Cter in SUMO2) cross-link involves residue K254. At S258 the chain carries Phosphoserine. K327 is covalently cross-linked (Glycyl lysine isopeptide (Lys-Gly) (interchain with G-Cter in SUMO2)). Position 334 is a phosphoserine (S334). Disordered regions lie at residues 345-367 (VSQRHSTPESDKTTSESSTLNHE), 390-450 (KNAI…KDDS), and 520-557 (KAGEVATEEEEEEEEEESEEELSDHDRNKDNEFSDEDN). K394 is covalently cross-linked (Glycyl lysine isopeptide (Lys-Gly) (interchain with G-Cter in SUMO2)). Basic and acidic residues predominate over residues 421 to 434 (DMSKEKEVDSESDT). The span at 435–444 (KPSNLEFNTT) shows a compositional bias: polar residues. A coiled-coil region spans residues 515–552 (LDEEDKAGEVATEEEEEEEEEESEEELSDHDRNKDNEF). Acidic residues predominate over residues 520–542 (KAGEVATEEEEEEEEEESEEELS). Residues 558 to 615 (LLSNTKSKLLKLMSSSIDTGLNIKELGGLYINFNADKVQLNKRTLTQMKEKRKDELLQ) are tdBR region; mediates interaction with DNTT. Residues K568, K594, and K616 each participate in a glycyl lysine isopeptide (Lys-Gly) (interchain with G-Cter in SUMO2) cross-link. T620 is modified (phosphothreonine). Residues K636, K659, K668, K696, and K741 each participate in a glycyl lysine isopeptide (Lys-Gly) (interchain with G-Cter in SUMO2) cross-link.

Forms a ternary complex with DNTT and core histone; interaction with PCNA releases DNTT and H2A/H2B histones from this ternary complex. Interacts with ESR1, ESR2, PPARG and RXRA. Part of the small subunit (SSU) processome, composed of more than 70 proteins and the RNA chaperone small nucleolar RNA (snoRNA) U3.

It localises to the nucleus. It is found in the nucleolus. In terms of biological role, regulates the transcriptional activity of DNTT and ESR1. May function as a chromatin remodeling protein. Part of the small subunit (SSU) processome, first precursor of the small eukaryotic ribosomal subunit. During the assembly of the SSU processome in the nucleolus, many ribosome biogenesis factors, an RNA chaperone and ribosomal proteins associate with the nascent pre-rRNA and work in concert to generate RNA folding, modifications, rearrangements and cleavage as well as targeted degradation of pre-ribosomal RNA by the RNA exosome. This chain is Deoxynucleotidyltransferase terminal-interacting protein 2 (DNTTIP2), found in Bos taurus (Bovine).